The chain runs to 226 residues: Imidazoleglycerol-phosphate dehydratase (226 aa).

The disordered stretch occupies residues 23–55 (LTGGPIERPQPSLFASEKGANTAGPDDASQTTA).

Belongs to the imidazoleglycerol-phosphate dehydratase family.

The enzyme catalyses D-erythro-1-(imidazol-4-yl)glycerol 3-phosphate = 3-(imidazol-4-yl)-2-oxopropyl phosphate + H2O. Its pathway is amino-acid biosynthesis; L-histidine biosynthesis; L-histidine from 5-phospho-alpha-D-ribose 1-diphosphate: step 6/9. The chain is Imidazoleglycerol-phosphate dehydratase (HIS3) from Maudiozyma humilis (Sour dough yeast).